The following is a 424-amino-acid chain: Histidine--tRNA ligase (424 aa).

It belongs to the class-II aminoacyl-tRNA synthetase family. As to quaternary structure, homodimer.

It localises to the cytoplasm. The catalysed reaction is tRNA(His) + L-histidine + ATP = L-histidyl-tRNA(His) + AMP + diphosphate + H(+). This is Histidine--tRNA ligase from Bacillus licheniformis (strain ATCC 14580 / DSM 13 / JCM 2505 / CCUG 7422 / NBRC 12200 / NCIMB 9375 / NCTC 10341 / NRRL NRS-1264 / Gibson 46).